Here is a 478-residue protein sequence, read N- to C-terminus: Chromosomal replication initiator protein DnaA (478 aa).

The segment at 1-95 (MNKTLNPQEV…DVLEKEITEE (95 aa)) is domain I, interacts with DnaA modulators. The tract at residues 96–141 (INDLVQSMEEEDFALIDHTKPVIPNFFDQNTRVNFGGGPNNHHPTT) is domain II. Positions 142–358 (GVNPRFTFDN…GALLRIFALA (217 aa)) are domain III, AAA+ region. Residues Gly-186, Gly-188, Lys-189, and Thr-190 each coordinate ATP. Positions 359–478 (SFNKEEINMT…YKLTQFILRR (120 aa)) are domain IV, binds dsDNA.

The protein belongs to the DnaA family. Oligomerizes as a right-handed, spiral filament on DNA at oriC.

Its subcellular location is the cytoplasm. Functionally, plays an essential role in the initiation and regulation of chromosomal replication. ATP-DnaA binds to the origin of replication (oriC) to initiate formation of the DNA replication initiation complex once per cell cycle. Binds the DnaA box (a 9 base pair repeat at the origin) and separates the double-stranded (ds)DNA. Forms a right-handed helical filament on oriC DNA; dsDNA binds to the exterior of the filament while single-stranded (ss)DNA is stabiized in the filament's interior. The ATP-DnaA-oriC complex binds and stabilizes one strand of the AT-rich DNA unwinding element (DUE), permitting loading of DNA polymerase. After initiation quickly degrades to an ADP-DnaA complex that is not apt for DNA replication. Binds acidic phospholipids. This Tropheryma whipplei (strain TW08/27) (Whipple's bacillus) protein is Chromosomal replication initiator protein DnaA.